Here is a 211-residue protein sequence, read N- to C-terminus: MSYDYLFKYIIIGDTGVGKSCLLLQFTDKRFQPVHDLTIGVEFGARMVTVDGRPIKLQIWDTAGQESFRSITRSYYRGAAGALLVYDITRRETFNHLASWLEDARQHANPNMSIMLIGNKCDLAHKRAVSKEEGQQFAKEHGLLFLEASARTAQNVEEAFIETAAKILQNIQDGVFDVSNESSGIKIGYGRTQGAAGGRDGTISQGGGCCG.

Gly-13 to Ser-20 lines the GTP pocket. Positions His-35–Phe-43 match the Effector region motif. GTP-binding positions include Asp-61–Gln-65, Asn-119–Asp-122, and Ser-149–Ala-150. S-geranylgeranyl cysteine attachment occurs at residues Cys-209 and Cys-210.

This sequence belongs to the small GTPase superfamily. Rab family.

It localises to the cell membrane. In terms of biological role, intracellular vesicle trafficking and protein transport. The polypeptide is Ras-related protein RABB1b (RABB1B) (Arabidopsis thaliana (Mouse-ear cress)).